Here is a 445-residue protein sequence, read N- to C-terminus: UDP-N-acetylglucosamine--peptide N-acetylglucosaminyltransferase stabilizing protein GtfB (445 aa).

A glycosyltransferase 1 region spans residues 55–171; that stretch reads KPLYFNQVPV…TLPGQSMRYF (117 aa).

It belongs to the GtfB family. As to quaternary structure, interacts with glycosyltransferase GtfA; probably forms a heterotetramer with 2 subunits each of GtfA and GtfB. Part of the accessory SecA2/SecY2 protein translocation apparatus.

Its subcellular location is the cell membrane. The protein operates within protein modification; protein glycosylation. Its function is as follows. Required for the polymorphic O-glycosylation of the serine-rich repeat protein PsrP. A stabilizing protein that is part of the accessory SecA2/SecY2 system specifically required to export serine-rich repeat cell wall proteins encoded upstream in the same operon. The GtfA-GtfB complex adds GlcNAc from UDP-GlcNAc to PsrP, attaching the first sugar residue. Stabilizes the glycosylation activity of GtfA. Has no N-acetylglucosaminyl transferase activity on its own. The protein is UDP-N-acetylglucosamine--peptide N-acetylglucosaminyltransferase stabilizing protein GtfB of Streptococcus pneumoniae serotype 4 (strain ATCC BAA-334 / TIGR4).